A 107-amino-acid chain; its full sequence is Benzene 1,2-dioxygenase system ferredoxin subunit (107 aa).

The region spanning 4–99 is the Rieske domain; that stretch reads TYILRQSDLP…IKVEGDEVHV (96 aa). [2Fe-2S] cluster is bound by residues Cys-43, His-45, Cys-62, and His-65.

Belongs to the bacterial ring-hydroxylating dioxygenase ferredoxin component family. As to quaternary structure, this dioxygenase system consists of four proteins: the two subunits of the hydroxylase component (BnzA and BnzB), a ferredoxin (BnzC) and a ferredoxin reductase (BnzD).

It participates in aromatic compound metabolism; benzene degradation; catechol from benzene: step 1/2. In terms of biological role, this protein seems to be a 2Fe-2S ferredoxin. The sequence is that of Benzene 1,2-dioxygenase system ferredoxin subunit (bnzC) from Pseudomonas putida (Arthrobacter siderocapsulatus).